The sequence spans 95 residues: Co-chaperonin GroES (95 aa).

This sequence belongs to the GroES chaperonin family. As to quaternary structure, heptamer of 7 subunits arranged in a ring. Interacts with the chaperonin GroEL.

The protein localises to the cytoplasm. In terms of biological role, together with the chaperonin GroEL, plays an essential role in assisting protein folding. The GroEL-GroES system forms a nano-cage that allows encapsulation of the non-native substrate proteins and provides a physical environment optimized to promote and accelerate protein folding. GroES binds to the apical surface of the GroEL ring, thereby capping the opening of the GroEL channel. This Deinococcus radiodurans (strain ATCC 13939 / DSM 20539 / JCM 16871 / CCUG 27074 / LMG 4051 / NBRC 15346 / NCIMB 9279 / VKM B-1422 / R1) protein is Co-chaperonin GroES.